Consider the following 212-residue polypeptide: 2,3-bisphosphoglycerate-dependent phosphoglycerate mutase (212 aa).

Substrate-binding positions include 9-16 (RHGQSEWN), 22-23 (TG), R61, 88-91 (ERDY), K99, 115-116 (RR), and 159-160 (GN). H10 serves as the catalytic Tele-phosphohistidine intermediate. The active-site Proton donor/acceptor is the E88.

The protein belongs to the phosphoglycerate mutase family. BPG-dependent PGAM subfamily. As to quaternary structure, homodimer.

It catalyses the reaction (2R)-2-phosphoglycerate = (2R)-3-phosphoglycerate. It functions in the pathway carbohydrate degradation; glycolysis; pyruvate from D-glyceraldehyde 3-phosphate: step 3/5. Its function is as follows. Catalyzes the interconversion of 2-phosphoglycerate and 3-phosphoglycerate. In Methylorubrum populi (strain ATCC BAA-705 / NCIMB 13946 / BJ001) (Methylobacterium populi), this protein is 2,3-bisphosphoglycerate-dependent phosphoglycerate mutase.